Here is a 360-residue protein sequence, read N- to C-terminus: Phospho-N-acetylmuramoyl-pentapeptide-transferase (360 aa).

10 helical membrane passes run 26–46 (AILS…IMIK), 70–90 (GTPT…ILLW), 94–114 (SNPY…VGFV), 132–152 (WKYF…YAYG), 168–188 (VMPQ…VGTS), 199–219 (GLAI…AWAT), 236–256 (ASEL…FLWF), 263–283 (VFMG…IAVL), 288–308 (LVLV…ILQV), and 338–358 (VIVR…ATLK).

The protein belongs to the glycosyltransferase 4 family. MraY subfamily. Requires Mg(2+) as cofactor.

Its subcellular location is the cell inner membrane. It catalyses the reaction UDP-N-acetyl-alpha-D-muramoyl-L-alanyl-gamma-D-glutamyl-meso-2,6-diaminopimeloyl-D-alanyl-D-alanine + di-trans,octa-cis-undecaprenyl phosphate = di-trans,octa-cis-undecaprenyl diphospho-N-acetyl-alpha-D-muramoyl-L-alanyl-D-glutamyl-meso-2,6-diaminopimeloyl-D-alanyl-D-alanine + UMP. It functions in the pathway cell wall biogenesis; peptidoglycan biosynthesis. Functionally, catalyzes the initial step of the lipid cycle reactions in the biosynthesis of the cell wall peptidoglycan: transfers peptidoglycan precursor phospho-MurNAc-pentapeptide from UDP-MurNAc-pentapeptide onto the lipid carrier undecaprenyl phosphate, yielding undecaprenyl-pyrophosphoryl-MurNAc-pentapeptide, known as lipid I. The polypeptide is Phospho-N-acetylmuramoyl-pentapeptide-transferase (Vibrio parahaemolyticus serotype O3:K6 (strain RIMD 2210633)).